Here is a 453-residue protein sequence, read N- to C-terminus: Aldehyde dehydrogenase, dimeric NADP-preferring (453 aa).

Ser-2 carries the N-acetylserine modification. Lys-178 bears the N6-acetyllysine mark. 188–193 (GSTAVG) contacts NAD(+). N6-acetyllysine is present on Lys-194. Active-site residues include Glu-210 and Cys-244.

Belongs to the aldehyde dehydrogenase family. As to quaternary structure, homodimer.

It localises to the cytoplasm. The enzyme catalyses an aldehyde + NAD(+) + H2O = a carboxylate + NADH + 2 H(+). The catalysed reaction is octanal + NAD(+) + H2O = octanoate + NADH + 2 H(+). In terms of biological role, ALDHs play a major role in the detoxification of alcohol-derived acetaldehyde. They are involved in the metabolism of corticosteroids, biogenic amines, neurotransmitters, and lipid peroxidation. Oxidizes medium and long chain aldehydes into non-toxic fatty acids. Preferentially oxidizes aromatic aldehyde substrates. Comprises about 50 percent of corneal epithelial soluble proteins. May play a role in preventing corneal damage caused by ultraviolet light. The polypeptide is Aldehyde dehydrogenase, dimeric NADP-preferring (Aldh3a1) (Rattus norvegicus (Rat)).